The sequence spans 177 residues: 2''-aminoglycoside nucleotidyltransferase (177 aa).

Mg(2+) contacts are provided by D44, D46, and D86. D86 functions as the Proton acceptor in the catalytic mechanism.

It depends on Mg(2+) as a cofactor.

The catalysed reaction is nucleoside triphosphate + gentamicin = diphosphate + 2''-nucleotidylgentamicin.. Functionally, mediates bacterial resistance to kanamycin, gentamicin, dibekacin, sisomicin, neomycin and tobramycin by adenylating the 2''-hydroxyl group of these antibiotics. This chain is 2''-aminoglycoside nucleotidyltransferase (aadB), found in Klebsiella pneumoniae.